Here is a 212-residue protein sequence, read N- to C-terminus: ATP-dependent Clp protease proteolytic subunit (212 aa).

Ser-106 (nucleophile) is an active-site residue. Residue His-131 is part of the active site.

It belongs to the peptidase S14 family. As to quaternary structure, fourteen ClpP subunits assemble into 2 heptameric rings which stack back to back to give a disk-like structure with a central cavity, resembling the structure of eukaryotic proteasomes.

It localises to the cytoplasm. The catalysed reaction is Hydrolysis of proteins to small peptides in the presence of ATP and magnesium. alpha-casein is the usual test substrate. In the absence of ATP, only oligopeptides shorter than five residues are hydrolyzed (such as succinyl-Leu-Tyr-|-NHMec, and Leu-Tyr-Leu-|-Tyr-Trp, in which cleavage of the -Tyr-|-Leu- and -Tyr-|-Trp bonds also occurs).. Cleaves peptides in various proteins in a process that requires ATP hydrolysis. Has a chymotrypsin-like activity. Plays a major role in the degradation of misfolded proteins. The chain is ATP-dependent Clp protease proteolytic subunit from Rhodopseudomonas palustris (strain HaA2).